We begin with the raw amino-acid sequence, 76 residues long: Omega-conotoxin-like TxO2 (76 aa).

The first 22 residues, 1–22, serve as a signal peptide directing secretion; sequence MKLTCVVIVAVLFLTAWTFVTA. Positions 23–52 are excised as a propeptide; the sequence is APHSSNALENLYLKAHHEMNNPEDSELNKR. 3 disulfides stabilise this stretch: Cys53–Cys67, Cys60–Cys71, and Cys66–Cys75.

It belongs to the conotoxin O1 superfamily. In terms of tissue distribution, expressed by the venom duct.

It localises to the secreted. Its function is as follows. Omega-conotoxins act at presynaptic membranes, they bind and block voltage-gated calcium channels (Cav). The polypeptide is Omega-conotoxin-like TxO2 (Conus textile (Cloth-of-gold cone)).